The primary structure comprises 1338 residues: Apoptotic chromatin condensation inducer in the nucleus (1338 aa).

Residues 1–57 (MWGRKRPNSSGETRGILSGNRGVDYGSGRGQSGPFEGRWRKLPKMPEAVGTDPSTSR) are disordered. The 35-residue stretch at 72-106 (LQALRVTDLKAALEQRGLAKSGQKSALVKRLKGAL) folds into the SAP domain. Phosphoserine occurs at positions 132, 166, 169, 208, 210, and 216. Residues 155-866 (EAREAAELEE…ATQKKPSISI (712 aa)) form a disordered region. The span at 161–171 (ELEEASAESED) shows a compositional bias: acidic residues. Residues 219–228 (EKPRKGERRS) show a composition bias toward basic and acidic residues. A Phosphoserine modification is found at Ser-242. The residue at position 253 (Thr-253) is a Phosphothreonine. Residue Lys-267 forms a Glycyl lysine isopeptide (Lys-Gly) (interchain with G-Cter in SUMO1) linkage. Positions 269–290 (EEEEEEEEEEEDDDDEEEEEVD) are enriched in acidic residues. Position 295 is a phosphoserine (Ser-295). A compositionally biased stretch (basic and acidic residues) spans 313–353 (ERTRAKPEKVVDEKPLNIRSQEKGELEKGGRVTRSQEEARR). Lys-318 is covalently cross-linked (Glycyl lysine isopeptide (Lys-Gly) (interchain with G-Cter in SUMO2)). 2 positions are modified to phosphoserine: Ser-332 and Ser-369. Residue Lys-378 forms a Glycyl lysine isopeptide (Lys-Gly) (interchain with G-Cter in SUMO2) linkage. Phosphoserine is present on residues Ser-387, Ser-389, Ser-391, and Ser-413. Phosphothreonine occurs at positions 417 and 423. The span at 425–434 (EASSPPTHIQ) shows a compositional bias: polar residues. Phosphoserine occurs at positions 454, 477, 479, 491, and 497. The segment covering 506-518 (QKSSLPECSTQKG) has biased composition (polar residues). Over residues 542–559 (ITEEPMKKQSLEQKEGRR) the composition is skewed to basic and acidic residues. Phosphoserine is present on Ser-561. Composition is skewed to low complexity over residues 573–603 (SADSSSSRSSSPSSSSSPSRSPSPDSVASRP) and 646–662 (RSASSSSRKSLSPGVSR). Position 654 is an N6,N6,N6-trimethyllysine; by EHMT2; alternate (Lys-654). Lys-654 is modified (N6,N6-dimethyllysine; by EHMT2; alternate). Residues Ser-655, Ser-657, Ser-710, and Ser-729 each carry the phosphoserine modification. Lys-732 participates in a covalent cross-link: Glycyl lysine isopeptide (Lys-Gly) (interchain with G-Cter in SUMO2). A compositionally biased stretch (polar residues) spans 744–754 (TQPQTSETQIS). Composition is skewed to basic and acidic residues over residues 757–767 (LESERTHHTVE) and 798–815 (NDERPEGGAEEEEKKESS). Ser-825 and Ser-838 each carry phosphoserine. Residues 855-866 (TAATQKKPSISI) show a composition bias toward polar residues. Lys-861 bears the N6-acetyllysine; alternate mark. Lys-861 participates in a covalent cross-link: Glycyl lysine isopeptide (Lys-Gly) (interchain with G-Cter in SUMO2); alternate. Residue Lys-879 forms a Glycyl lysine isopeptide (Lys-Gly) (interchain with G-Cter in SUMO2) linkage. Over residues 892–915 (ADDSRISEDETERNGDDGTHDKGL) the composition is skewed to basic and acidic residues. The disordered stretch occupies residues 892-950 (ADDSRISEDETERNGDDGTHDKGLKICRTVTQVVPAEGQENGQREEEEEKEPEAELPAP). A phosphoserine mark is found at Ser-895 and Ser-898. The segment covering 936–945 (EEEEEKEPEA) has biased composition (acidic residues). A Glycyl lysine isopeptide (Lys-Gly) (interchain with G-Cter in SUMO2) cross-link involves residue Lys-969. Thr-975 is subject to Phosphothreonine. 3 positions are modified to phosphoserine: Ser-986, Ser-989, and Ser-1003. Glycyl lysine isopeptide (Lys-Gly) (interchain with G-Cter in SUMO2) cross-links involve residues Lys-1046 and Lys-1106. Disordered stretches follow at residues 1104 to 1214 (ETKA…DDLF) and 1226 to 1338 (LPLT…GGRR). Positions 1115–1129 (PLHPPPPPPVQPPPH) are enriched in pro residues. Over residues 1130 to 1174 (PRAEQREQERAVREQWAEREREMERRERTRSEREWDRDKVREGPR) the composition is skewed to basic and acidic residues. The span at 1175-1192 (SRSRSRDRRRKERAKSKE) shows a compositional bias: basic residues. Phosphoserine; by SRPK2 and PKB/AKT1 is present on Ser-1179. 2 stretches are compositionally biased toward basic and acidic residues: residues 1193–1214 (KKSEKKEKAQEEPPAKLLDDLF) and 1236–1317 (KEAE…DRRD). A sufficient for interaction with RNPS1 and SAP18 and formation of the ASAP complex region spans residues 1209 to 1236 (LLDDLFRKTKAAPCIYWLPLTESQIVQK).

In terms of assembly, found in a mRNA splicing-dependent exon junction complex (EJC). Component of the heterotrimeric ASAP (apoptosis- and splicing-associated protein) complexes consisting of RNPS1, SAP18 and different isoforms of ACIN1; the association of SAP18 seems to require a preformed RNPS1:ACIN1 complex. Interacts with API5. Interacts with SRPK2 in a phosphorylation-dependent manner. In terms of processing, undergoes proteolytic cleavage; the processed form is active, contrary to the uncleaved form. Post-translationally, phosphorylation on Ser-1179 by SRPK2 up-regulates its stimulatory effect on cyclin A1.

The protein resides in the nucleus. The protein localises to the nucleus speckle. It is found in the nucleoplasm. In terms of biological role, auxiliary component of the splicing-dependent multiprotein exon junction complex (EJC) deposited at splice junction on mRNAs. The EJC is a dynamic structure consisting of core proteins and several peripheral nuclear and cytoplasmic associated factors that join the complex only transiently either during EJC assembly or during subsequent mRNA metabolism. Component of the ASAP complexes which bind RNA in a sequence-independent manner and are proposed to be recruited to the EJC prior to or during the splicing process and to regulate specific excision of introns in specific transcription subsets; ACIN1 confers RNA-binding to the complex. The ASAP complex can inhibit RNA processing during in vitro splicing reactions. The ASAP complex promotes apoptosis and is disassembled after induction of apoptosis. Involved in the splicing modulation of BCL2L1/Bcl-X (and probably other apoptotic genes); specifically inhibits formation of proapoptotic isoforms such as Bcl-X(S); the activity is different from the established EJC assembly and function. Induces apoptotic chromatin condensation after activation by CASP3. Regulates cyclin A1, but not cyclin A2, expression in leukemia cells. This Mus musculus (Mouse) protein is Apoptotic chromatin condensation inducer in the nucleus (Acin1).